The chain runs to 228 residues: Ribosomal RNA small subunit methyltransferase G (228 aa).

S-adenosyl-L-methionine-binding positions include Gly89, Leu94, 140 to 141 (VE), and Arg159.

This sequence belongs to the methyltransferase superfamily. RNA methyltransferase RsmG family.

The protein resides in the cytoplasm. The catalysed reaction is guanosine(527) in 16S rRNA + S-adenosyl-L-methionine = N(7)-methylguanosine(527) in 16S rRNA + S-adenosyl-L-homocysteine. Functionally, specifically methylates the N7 position of guanine in position 527 of 16S rRNA. The protein is Ribosomal RNA small subunit methyltransferase G of Burkholderia ambifaria (strain MC40-6).